The chain runs to 131 residues: Large ribosomal subunit protein bL12 (131 aa).

The protein belongs to the bacterial ribosomal protein bL12 family. As to quaternary structure, homodimer. Part of the ribosomal stalk of the 50S ribosomal subunit. Forms a multimeric L10(L12)X complex, where L10 forms an elongated spine to which 2 to 4 L12 dimers bind in a sequential fashion. Binds GTP-bound translation factors.

Functionally, forms part of the ribosomal stalk which helps the ribosome interact with GTP-bound translation factors. Is thus essential for accurate translation. The polypeptide is Large ribosomal subunit protein bL12 (Prochlorococcus marinus (strain NATL2A)).